A 526-amino-acid polypeptide reads, in one-letter code: Cytochrome P450 monooxygenase milC (526 aa).

Residues 2-20 (AIHAAYIFIAATLIALYVA) traverse the membrane as a helical segment. Cys470 serves as a coordination point for heme.

This sequence belongs to the cytochrome P450 family. Requires heme as cofactor.

The protein localises to the membrane. It catalyses the reaction cordypyrone A + reduced [NADPH--hemoprotein reductase] + O2 = cordypyrone B + oxidized [NADPH--hemoprotein reductase] + H2O + H(+). It participates in secondary metabolite biosynthesis. Functionally, cytochrome P450 monooxygenase; part of the gene cluster that mediates the biosynthesis of cordypyrones A and B, 2 pyrones that show modest activities against pathogenic bacteria including methicillin-resistant Staphylococcus aureus (MRSA), Mycobacterium tuberculosis and Bacillus cereus. The HR-PKS milA catalyzes the formation of cordypyrones A via condensation of one acetate with 10 malonate units. Since milA lacks an enoyl reductase domain, the 2 beta-keto processing domains DH and KR of milA collaborate with the trans-enoyl reductase milB to catalyze the different levels of reduction. The cytochrome P450 monooxygenase milC then hydroxylates the C-22 of cordypyrones A to yield cordypyrones B. The polypeptide is Cytochrome P450 monooxygenase milC (Cordyceps militaris (strain CM01) (Caterpillar fungus)).